The chain runs to 970 residues: Toxin subunit YenC2 (970 aa).

9 RHS repeats span residues Ala168–Gln182, Gly297–Leu311, Leu329–Leu343, Val361–Val375, Asn408–Met422, Asp500–Ile514, Asn580–Ser594, Ser606–Ala620, and Asp640–Pro654. Residues Tyr610–Met690 form an RHS-repeat associated core domain region. The tract at residues Thr849–Leu950 is deaminase domain.

It belongs to the RHS family. As to quaternary structure, semipurified toxin complex consists of at least YenA1-YenA2-YenB-YenC1-YenC2-Chi1-Chi2. YenB and the N-terminus of YenC2 form a large hollow shell of beta-strands. The shell is closed at both ends, within which the C-terminus of YenC2 is probably found. The C-terminal region dissociates from the YenB-YenC2 complex at pH 4.5 but not 7.5. The Yen-TC:K9 subcomplex is about 26 nm tall and 22 nm in diameter with 5-fold symmetry and 5 copies of YenA1, YenA2, Chi1 and Chi2; the chitinase subunits may be solvent accessible on the exterior the complex. The Yen-TC:K9 subcomplex has no insecticidal activity. The native complex with additional YenB, YenC1 and YenC2 subunits is 16 nm taller and is insecticidal; the toxicity-conferring subunits are present at about 1 copy each.

Its subcellular location is the secreted. Toxin complex is secreted when grown at 25 degrees Celsius or less; at higher temperatures the proteins are present intracellularly but not secreted. Functionally, part of an orally active toxin complex (TC) with strong insecticidal effects on larvae of the Coleoptera Costelytra zealandica, Acrossidius tasmania and Adoryphorus couloni and some Lepidoptera larvae. The TC has an endochitinase activity. The protein is Toxin subunit YenC2 of Yersinia entomophaga.